A 331-amino-acid chain; its full sequence is MRRGLLLLNLGTPDNADIRAVKLYLREFLTDKRVIDLPTIPRYILVYCLILPFRSPKSAQAYQSIWTEKGSPLLYHSQNLVTKLQSALKDEYKIALGMRYGTPSITTALAELKDCHSLTILPLFPQYSSAATGSAIEKTLSYLANQEIIPSIKIIRDFYQRPEYIQAQAKIMKPYIKDNFHVLFSYHGIPERHIHKSGCDTLCPQTCTPIYDKNQACYRAQCYQTSLLLAKELQLGTHQYTTAFQSRLGKTPWIKPYTDEIFAELISKGIKNIVVSCPSFVADCLETLEEIGIRAKEQWEKLGGEQFILTPCMNDHPEWIKAIHSIVNEQI.

Fe cation-binding residues include His-187 and Glu-286.

This sequence belongs to the ferrochelatase family.

It localises to the cytoplasm. The enzyme catalyses heme b + 2 H(+) = protoporphyrin IX + Fe(2+). It participates in porphyrin-containing compound metabolism; protoheme biosynthesis; protoheme from protoporphyrin-IX: step 1/1. Its function is as follows. Catalyzes the ferrous insertion into protoporphyrin IX. This is Ferrochelatase from Legionella pneumophila (strain Corby).